The sequence spans 297 residues: Aspartate carbamoyltransferase catalytic subunit (297 aa).

Carbamoyl phosphate-binding residues include Arg-48 and Thr-49. Lys-76 provides a ligand contact to L-aspartate. The carbamoyl phosphate site is built by Arg-98, His-129, and Gln-132. L-aspartate is bound by residues Arg-162 and Arg-214. Ala-257 and Pro-258 together coordinate carbamoyl phosphate.

It belongs to the aspartate/ornithine carbamoyltransferase superfamily. ATCase family. As to quaternary structure, heterododecamer (2C3:3R2) of six catalytic PyrB chains organized as two trimers (C3), and six regulatory PyrI chains organized as three dimers (R2).

It catalyses the reaction carbamoyl phosphate + L-aspartate = N-carbamoyl-L-aspartate + phosphate + H(+). It functions in the pathway pyrimidine metabolism; UMP biosynthesis via de novo pathway; (S)-dihydroorotate from bicarbonate: step 2/3. In terms of biological role, catalyzes the condensation of carbamoyl phosphate and aspartate to form carbamoyl aspartate and inorganic phosphate, the committed step in the de novo pyrimidine nucleotide biosynthesis pathway. The protein is Aspartate carbamoyltransferase catalytic subunit of Leuconostoc mesenteroides subsp. mesenteroides (strain ATCC 8293 / DSM 20343 / BCRC 11652 / CCM 1803 / JCM 6124 / NCDO 523 / NBRC 100496 / NCIMB 8023 / NCTC 12954 / NRRL B-1118 / 37Y).